The chain runs to 562 residues: Tryptophan 2-monooxygenase (562 aa).

Residues S54, E74, R76, R82, and R104 each contribute to the FMN site. R104 contacts substrate.

It belongs to the tryptophan 2-monooxygenase family. The cofactor is FMN.

It carries out the reaction L-tryptophan + O2 = indole-3-acetamide + CO2 + H2O. Its pathway is plant hormone metabolism; auxin biosynthesis. In Pantoea agglomerans pv. gypsophilae (Erwinia herbicola), this protein is Tryptophan 2-monooxygenase (iaaM).